The primary structure comprises 1026 residues: RecBCD enzyme subunit RecB (1026 aa).

The 438-residue stretch at 1 to 438 (MSSFDIFSPT…LILDTNYRST (438 aa)) folds into the UvrD-like helicase ATP-binding domain. A DNA-binding and helicase activity, interacts with RecC region spans residues 1–766 (MSSFDIFSPT…LANYANVTKH (766 aa)). 21–28 (ASAGTGKT) is a binding site for ATP. Residues 815-1026 (SRTIHSFSST…KGNGFLQPGR (212 aa)) form a nuclease activity, interacts with RecD and RecA region. Positions 854, 940, and 953 each coordinate Mg(2+). Aspartate 953 functions as the For nuclease activity in the catalytic mechanism.

This sequence belongs to the helicase family. UvrD subfamily. Heterotrimer of RecB, RecC and RecD. All subunits contribute to DNA-binding. Interacts with RecA. Requires Mg(2+) as cofactor.

The catalysed reaction is Exonucleolytic cleavage (in the presence of ATP) in either 5'- to 3'- or 3'- to 5'-direction to yield 5'-phosphooligonucleotides.. It carries out the reaction Couples ATP hydrolysis with the unwinding of duplex DNA by translocating in the 3'-5' direction.. The enzyme catalyses ATP + H2O = ADP + phosphate + H(+). Its function is as follows. A helicase/nuclease that prepares dsDNA breaks (DSB) for recombinational DNA repair. Binds to DSBs and unwinds DNA via a highly rapid and processive ATP-dependent bidirectional helicase activity. Unwinds dsDNA until it encounters a Chi (crossover hotspot instigator) sequence from the 3' direction. Cuts ssDNA a few nucleotides 3' to the Chi site. The properties and activities of the enzyme are changed at Chi. The Chi-altered holoenzyme produces a long 3'-ssDNA overhang and facilitates RecA-binding to the ssDNA for homologous DNA recombination and repair. Holoenzyme degrades any linearized DNA that is unable to undergo homologous recombination. In the holoenzyme this subunit contributes ATPase, 3'-5' helicase, exonuclease activity and loads RecA onto ssDNA. The protein is RecBCD enzyme subunit RecB of Chlamydia trachomatis serovar D (strain ATCC VR-885 / DSM 19411 / UW-3/Cx).